A 510-amino-acid polypeptide reads, in one-letter code: Solute carrier family 2, facilitated glucose transporter member 2 (510 aa).

Residues 1–10 are Cytoplasmic-facing; sequence MTEDKVTGTL. Residues 11–31 traverse the membrane as a helical segment; it reads VLAVFTAVLSSFQFGYDIGVI. The Extracellular portion of the chain corresponds to 32 to 96; sequence NAPQQVIITH…SASLITMFWS (65 aa). Asn-62 carries N-linked (GlcNAc...) asparagine glycosylation. The helical transmembrane segment at 97–117 threads the bilayer; that stretch reads LSVSSFAVGGMIASFFGGLLG. At 118 to 122 the chain is on the cytoplasmic side; sequence DKLGR. A helical transmembrane segment spans residues 123 to 143; the sequence is IKALLVANILSLVGALLMGFS. The Extracellular segment spans residues 144 to 157; it reads KLGPSHILIISGRG. The chain crosses the membrane as a helical span at residues 158–178; it reads ISGLYCGLISGLIPMYIGEIA. The Cytoplasmic portion of the chain corresponds to 179–191; the sequence is PTTLRGAIGALHQ. Gln-191 contributes to the D-glucose binding site. The helical transmembrane segment at 192–212 threads the bilayer; it reads LAIVTGILISQIVGLDFILGN. Topologically, residues 213–215 are extracellular; the sequence is HEL. The helical transmembrane segment at 216–236 threads the bilayer; that stretch reads WHILLGLSAVPAILQCLLLFF. Residues 237-301 are Cytoplasmic-facing; it reads CPESPRYLYI…LFTNASYRQP (65 aa). The helical transmembrane segment at 302 to 322 threads the bilayer; sequence ILVALMLHAAQQFSGINGIFY. Residues 312 to 313 and Asn-318 contribute to the D-glucose site; that span reads QQ. At 323 to 336 the chain is on the extracellular side; the sequence is YSTSIFQTAGISQP. The chain crosses the membrane as a helical span at residues 337-357; the sequence is VYATIGVGAVNTVFTAVSVFL. Residue Asn-347 coordinates D-glucose. At 358 to 365 the chain is on the cytoplasmic side; sequence VEKAGRRS. Residues 366-386 traverse the membrane as a helical segment; that stretch reads LFLIGMSGMFVCAIFMSVGLV. Over 387 to 400 the chain is Extracellular; it reads LLSKFPWMNYVSMT. A helical transmembrane segment spans residues 401–421; that stretch reads AIFLFVSFFEIGPGPIPWFMV. D-glucose contacts are provided by Glu-410 and Trp-418. Residues 422-431 lie on the Cytoplasmic side of the membrane; that stretch reads AEFFSQGPRP. Residues 432 to 452 form a helical membrane-spanning segment; it reads AALAIAAFSNWTGNFIIALCF. Topologically, residues 453 to 454 are extracellular; it reads QY. The chain crosses the membrane as a helical span at residues 455-475; it reads IADFCGPYVFFLLLVWSWPLF. At 476–510 the chain is on the cytoplasmic side; sequence CSHFLKFQKPKENPLRKSQQSSERRGVQLKRQKLL. The tract at residues 490-510 is disordered; sequence LRKSQQSSERRGVQLKRQKLL.

Belongs to the major facilitator superfamily. Sugar transporter (TC 2.A.1.1) family. Glucose transporter subfamily. In terms of processing, N-glycosylated; required for stability and retention at the cell surface of pancreatic beta cells.

The protein resides in the cell membrane. The catalysed reaction is D-glucose(out) = D-glucose(in). It catalyses the reaction D-fructose(out) = D-fructose(in). It carries out the reaction L-dehydroascorbate(out) = L-dehydroascorbate(in). The enzyme catalyses D-galactose(in) = D-galactose(out). With respect to regulation, D-glucose and maltose competitively inhibit fructose transport. D-glucose, D-fructose and maltose inhibit deoxyglucose transport. Functionally, facilitative hexose transporter that mediates the transport of glucose, fructose and galactose. Likely mediates the bidirectional transfer of glucose across the plasma membrane of hepatocytes and is responsible for uptake of glucose by the beta cells; may comprise part of the glucose-sensing mechanism of the beta cell. May also participate with the Na(+)/glucose cotransporter in the transcellular transport of glucose in the small intestine and kidney. Also able to mediate the transport of dehydroascorbate. The sequence is that of Solute carrier family 2, facilitated glucose transporter member 2 from Bos taurus (Bovine).